The sequence spans 518 residues: 2-isopropylmalate synthase (518 aa).

Positions 4–266 constitute a Pyruvate carboxyltransferase domain; that stretch reads INFFDTTLRD…ESTIQLNEIK (263 aa). Mn(2+) contacts are provided by Asp13, His201, His203, and Asn237. The tract at residues 391–518 is regulatory domain; it reads DFISLQVHYG…GLSKQAAVGS (128 aa).

This sequence belongs to the alpha-IPM synthase/homocitrate synthase family. LeuA type 1 subfamily. As to quaternary structure, homodimer. Requires Mn(2+) as cofactor.

It is found in the cytoplasm. The enzyme catalyses 3-methyl-2-oxobutanoate + acetyl-CoA + H2O = (2S)-2-isopropylmalate + CoA + H(+). Its pathway is amino-acid biosynthesis; L-leucine biosynthesis; L-leucine from 3-methyl-2-oxobutanoate: step 1/4. Its function is as follows. Catalyzes the condensation of the acetyl group of acetyl-CoA with 3-methyl-2-oxobutanoate (2-ketoisovalerate) to form 3-carboxy-3-hydroxy-4-methylpentanoate (2-isopropylmalate). The polypeptide is 2-isopropylmalate synthase (Bacillus licheniformis (strain ATCC 14580 / DSM 13 / JCM 2505 / CCUG 7422 / NBRC 12200 / NCIMB 9375 / NCTC 10341 / NRRL NRS-1264 / Gibson 46)).